The following is a 288-amino-acid chain: MEWSLSQNKLLAFHRLMRTDKPIGALLLLWPTLWALWVASPGVPPLWILAVFVAGVWLMRAAGCVVNDYADRKFDGHVKRTARRPLPSGDVTEKEARTLFIVLVLLSFLLVLTLNTMTILLSVAALALAWVYPFMKRYTHLPQVVLGAAFGWSIPMAFSAVSESLPLSCWLMFLANILWAVAYDTQYAMVDRDDDVKIGIKSTAILFGENDRLIIGILQVAVLALMGAVGWLNGLGWEYYWSLFVAAGLFGWQQKLIFNRDRDNCFKAFMNNNYVGLVLFLGLAMSYL.

6 consecutive transmembrane segments (helical) span residues 33 to 53 (LWAL…AVFV), 99 to 119 (LFIV…TMTI), 163 to 183 (ESLP…AVAY), 213 to 233 (LIIG…GWLN), 234 to 254 (GLGW…GWQQ), and 268 to 288 (AFMN…MSYL).

It belongs to the UbiA prenyltransferase family. Mg(2+) serves as cofactor.

Its subcellular location is the cell inner membrane. It carries out the reaction all-trans-octaprenyl diphosphate + 4-hydroxybenzoate = 4-hydroxy-3-(all-trans-octaprenyl)benzoate + diphosphate. The protein operates within cofactor biosynthesis; ubiquinone biosynthesis. Catalyzes the prenylation of para-hydroxybenzoate (PHB) with an all-trans polyprenyl group. Mediates the second step in the final reaction sequence of ubiquinone-8 (UQ-8) biosynthesis, which is the condensation of the polyisoprenoid side chain with PHB, generating the first membrane-bound Q intermediate 3-octaprenyl-4-hydroxybenzoate. This Klebsiella pneumoniae subsp. pneumoniae (strain ATCC 700721 / MGH 78578) protein is 4-hydroxybenzoate octaprenyltransferase.